A 351-amino-acid chain; its full sequence is N-acetyl-gamma-glutamyl-phosphate reductase (351 aa).

Residue Cys-150 is part of the active site.

Belongs to the NAGSA dehydrogenase family. Type 1 subfamily.

It localises to the cytoplasm. The enzyme catalyses N-acetyl-L-glutamate 5-semialdehyde + phosphate + NADP(+) = N-acetyl-L-glutamyl 5-phosphate + NADPH + H(+). It participates in amino-acid biosynthesis; L-arginine biosynthesis; N(2)-acetyl-L-ornithine from L-glutamate: step 3/4. Its function is as follows. Catalyzes the NADPH-dependent reduction of N-acetyl-5-glutamyl phosphate to yield N-acetyl-L-glutamate 5-semialdehyde. The chain is N-acetyl-gamma-glutamyl-phosphate reductase from Heliobacterium modesticaldum (strain ATCC 51547 / Ice1).